An 818-amino-acid polypeptide reads, in one-letter code: Myosin-A (818 aa).

Ser-19 carries the phosphoserine; by PKG modification. Positions 97-771 (MSFGDIGLLN…GAKILTKIQR (675 aa)) constitute a Myosin motor domain. Residue 191–198 (GESGAGKT) coordinates ATP. An actin-binding region spans residues 661–671 (PHFIRCIKPNE). The tract at residues 773–818 (KLVEWENCVSVIEAAILKHKYKQKVNKNIPSLLRVQAHIRKKMVAQ) is tail.

This sequence belongs to the TRAFAC class myosin-kinesin ATPase superfamily. Myosin family. In terms of assembly, component of the glideosome complex composed of GAP50, GAP45, MTIP and MyoA; the complex is formed during the late schizont stage and in merozoites. MyoA, MTIP and GAP45 probably form an initial complex in the cytoplasm which is then recruited to the outer face of the inner membrane complex via the interaction with GAP50. Interacts with ACT1.

It localises to the cell membrane. In terms of biological role, myosins are actin-based motor molecules with ATPase activity. Unconventional myosins serve in intracellular movements. Their highly divergent tails are presumed to bind to membranous compartments, which would be moved relative to actin filaments. The chain is Myosin-A from Plasmodium falciparum (isolate 3D7).